Here is a 378-residue protein sequence, read N- to C-terminus: 1-acyl-sn-glycerol-3-phosphate acyltransferase delta (378 aa).

Residues 11-31 (FLCHLVFCYVFIASGLIINTV) traverse the membrane as a helical segment. Residues 96-101 (HKFEID) carry the HXXXXD motif motif. The next 3 helical transmembrane spans lie at 125 to 145 (ELAY…VFCS), 307 to 327 (TLVN…QFLV), and 338 to 358 (LASF…MIGV).

The protein belongs to the 1-acyl-sn-glycerol-3-phosphate acyltransferase family.

It is found in the endoplasmic reticulum membrane. It carries out the reaction a 1-acyl-sn-glycero-3-phosphate + an acyl-CoA = a 1,2-diacyl-sn-glycero-3-phosphate + CoA. The catalysed reaction is (4Z,7Z,10Z,13Z,16Z,19Z)-docosahexaenoyl-CoA + 1-hexadecanoyl-sn-glycero-3-phosphate = 1-hexadecanoyl-2-(4Z,7Z,10Z,13Z,16Z,19Z-docosahexaenoyl)-sn-glycero-3-phosphate + CoA. It catalyses the reaction 1-octadecanoyl-sn-glycero-3-phosphate + (9Z,12Z)-octadecadienoyl-CoA = 1-octadecanoyl-2-(9Z,12Z-octadecadienoyl)-sn-glycero-3-phosphate + CoA. The enzyme catalyses 1-octadecanoyl-sn-glycero-3-phosphate + (4Z,7Z,10Z,13Z,16Z,19Z)-docosahexaenoyl-CoA = 1-octadecanoyl-2-(4Z,7Z,10Z,13Z,16Z,19Z-docosahexaenoyl)-sn-glycero-3-phosphate + CoA. It carries out the reaction (4Z,7Z,10Z,13Z,16Z,19Z)-docosahexaenoyl-CoA + 1-(9Z-octadecenoyl)-sn-glycero-3-phosphate = 1-(9Z-octadecenoyl)-2-(4Z,7Z,10Z,13Z,16Z,19Z-docosahexaenoyl)-sn-glycero-3-phosphate + CoA. It participates in phospholipid metabolism; CDP-diacylglycerol biosynthesis; CDP-diacylglycerol from sn-glycerol 3-phosphate: step 2/3. Functionally, converts 1-acyl-sn-glycerol-3-phosphate (lysophosphatidic acid or LPA) into 1,2-diacyl-sn-glycerol-3-phosphate (phosphatidic acid or PA) by incorporating an acyl moiety at the sn-2 position of the glycerol backbone. Exhibits high acyl-CoA specificity for polyunsaturated fatty acyl-CoA, especially docosahexaenoyl-CoA (22:6-CoA, DHA-CoA). The polypeptide is 1-acyl-sn-glycerol-3-phosphate acyltransferase delta (AGPAT4) (Macaca fascicularis (Crab-eating macaque)).